Here is a 238-residue protein sequence, read N- to C-terminus: uncharacterized protein (238 aa).

A run of 6 helical transmembrane segments spans residues 24-44 (IFIA…YMKN), 78-98 (GFLL…LPGL), 109-129 (ILFI…IILV), 156-176 (FILL…IQVI), 188-208 (MYAY…IITP), and 216-236 (IIMS…LKIL).

This sequence belongs to the TatC family.

It localises to the plastid. The protein localises to the chloroplast membrane. This is an uncharacterized protein from Gracilaria tenuistipitata var. liui (Red alga).